The sequence spans 390 residues: Coenzyme A biosynthesis bifunctional protein CoaBC (390 aa).

The phosphopantothenoylcysteine decarboxylase stretch occupies residues 1 to 188; that stretch reads MDKNKHILIG…NQKDYLKNKK (188 aa). The Proton donor role is filled by Cys156. A phosphopantothenate--cysteine ligase region spans residues 189-390; the sequence is ILITASRTEE…VAKEILKILY (202 aa). CTP contacts are provided by residues Asp277, Lys287, 304–307, Phe323, Lys338, and Lys342; that span reads PDII.

The protein in the N-terminal section; belongs to the HFCD (homo-oligomeric flavin containing Cys decarboxylase) superfamily. This sequence in the C-terminal section; belongs to the PPC synthetase family. Requires Mg(2+) as cofactor. FMN serves as cofactor.

The catalysed reaction is N-[(R)-4-phosphopantothenoyl]-L-cysteine + H(+) = (R)-4'-phosphopantetheine + CO2. It carries out the reaction (R)-4'-phosphopantothenate + L-cysteine + CTP = N-[(R)-4-phosphopantothenoyl]-L-cysteine + CMP + diphosphate + H(+). The protein operates within cofactor biosynthesis; coenzyme A biosynthesis; CoA from (R)-pantothenate: step 2/5. It participates in cofactor biosynthesis; coenzyme A biosynthesis; CoA from (R)-pantothenate: step 3/5. Catalyzes two sequential steps in the biosynthesis of coenzyme A. In the first step cysteine is conjugated to 4'-phosphopantothenate to form 4-phosphopantothenoylcysteine. In the second step the latter compound is decarboxylated to form 4'-phosphopantotheine. The sequence is that of Coenzyme A biosynthesis bifunctional protein CoaBC from Borreliella burgdorferi (strain ATCC 35210 / DSM 4680 / CIP 102532 / B31) (Borrelia burgdorferi).